The following is a 40-amino-acid chain: Subtilisin-like serine protease AS-E1 (40 aa).

Residues 4 to 40 form the Peptidase S8 domain; sequence PWGLARISHRTTGATSYVYDDSAGEGTCSYIIDTGIY. Aspartate 36 acts as the Charge relay system in catalysis.

This sequence belongs to the peptidase S8 family. Homodimer.

With respect to regulation, strongly inhibited by antipain and PMSF. Inhibited by benzamidine and aprotinin by 80% and 17% respectively. Little or no inhibition by EDTA, E-64, iodoacetic acid, leupeptin and FUT-175. In terms of biological role, subtilisin-like serine protease. Cleaves prothrombin at 155-Arg-|-Ser-156, 45-Thr-|-Ala-46 and 316-Tyr-|-Ile-317 to produce meizothrombin(desF1)-like molecules. Degrades fibrinogen. Inhibits plasma coagulation. This chain is Subtilisin-like serine protease AS-E1, found in Acremonium sp.